The chain runs to 332 residues: Autoinducer 2 import system permease protein LsrD (332 aa).

The next 10 helical transmembrane spans lie at 7-27 (YSWE…FGLI), 45-65 (ICIG…GMDI), 70-90 (TIGL…PLPL), 91-111 (AIII…GLII), 118-138 (LVIT…LSGM), 162-182 (FLGI…FWLL), 216-236 (VYAM…SYFG), 240-260 (SDLG…GGAN), 261-281 (IYGG…VGFL), and 288-308 (AGVP…VVVV).

The protein belongs to the binding-protein-dependent transport system permease family. AraH/RbsC subfamily. In terms of assembly, the complex is composed of two ATP-binding proteins (LsrA), two transmembrane proteins (LsrC and LsrD) and a solute-binding protein (LsrB).

It is found in the cell inner membrane. Its function is as follows. Part of the ABC transporter complex LsrABCD involved in autoinducer 2 (AI-2) import. Probably responsible for the translocation of the substrate across the membrane. In Salmonella paratyphi B (strain ATCC BAA-1250 / SPB7), this protein is Autoinducer 2 import system permease protein LsrD (lsrD).